The chain runs to 194 residues: Fe/S biogenesis protein NfuA (194 aa).

Positions 152 and 155 each coordinate [4Fe-4S] cluster.

Belongs to the NfuA family. As to quaternary structure, homodimer. [4Fe-4S] cluster is required as a cofactor.

Involved in iron-sulfur cluster biogenesis. Binds a 4Fe-4S cluster, can transfer this cluster to apoproteins, and thereby intervenes in the maturation of Fe/S proteins. Could also act as a scaffold/chaperone for damaged Fe/S proteins. The sequence is that of Fe/S biogenesis protein NfuA from Pseudomonas fluorescens (strain Pf0-1).